The chain runs to 577 residues: Arginine--tRNA ligase (577 aa).

The short motif at 122–132 (PNVAKEMHVGH) is the 'HIGH' region element.

This sequence belongs to the class-I aminoacyl-tRNA synthetase family. In terms of assembly, monomer.

It localises to the cytoplasm. It catalyses the reaction tRNA(Arg) + L-arginine + ATP = L-arginyl-tRNA(Arg) + AMP + diphosphate. The polypeptide is Arginine--tRNA ligase (Vibrio parahaemolyticus serotype O3:K6 (strain RIMD 2210633)).